Here is a 339-residue protein sequence, read N- to C-terminus: Intelectin-1 (339 aa).

A signal peptide spans 1-18 (MLSYSLLLLALAFPAGHA). The 51-residue stretch at 58–108 (GDMNYGYRSCNEIKSSDSRAPDGIYTLATEDGESYQTFCDMTTNGGGWTLV) folds into the Fibrinogen C-terminal domain. Cysteines 67 and 96 form a disulfide. Ca(2+)-binding residues include His112, Glu113, Asn115, Gly118, Gly123, Asp124, and Asp159. 3 disulfides stabilise this stretch: Cys120/Cys306, Cys225/Cys285, and Cys277/Cys291. Asn189 carries an N-linked (GlcNAc...) asparagine glycan. Residues Asn286, Glu288, Glu300, and Asp308 each coordinate Ca(2+). Residues 288–289 (EH) and Glu300 each bind a carbohydrate.

Homotrimer; disulfide-linked. Homohexamer; disulfide-linked. Forms primarily homotrimers in solution, but can also form homohexamers. In terms of processing, N-glycosylated.

Its subcellular location is the secreted. The protein localises to the cytoplasmic vesicle. It is found in the secretory vesicle. Lectin that specifically recognizes microbial carbohydrate chains in a calcium-dependent manner. Binds to microbial glycans that contain a terminal acyclic 1,2-diol moiety, including beta-linked D-galactofuranose (beta-Galf) and D-phosphoglycerol-modified glycans. Binds to S.pneumoniae serotypes with glycans that contain beta-linked D-galactofuranose (beta-Galf) and with D-phosphoglycerol-modified glycans. Can bind a variety of monosaccharides (in vitro). Probably plays a role in the defense system against microorganisms. This chain is Intelectin-1 (itln1), found in Xenopus laevis (African clawed frog).